We begin with the raw amino-acid sequence, 30 residues long: Dermaseptin-J10 (30 aa).

In terms of tissue distribution, expressed by the skin glands.

The protein resides in the secreted. Its function is as follows. Has antimicrobial activity. This is Dermaseptin-J10 from Phasmahyla jandaia (Jandaia leaf frog).